Here is a 311-residue protein sequence, read N- to C-terminus: Phosphoglycerate mutase 2 (311 aa).

Substrate is bound by residues 16–23, 29–30, R73, 126–129, K137, 153–154, and 243–244; these read RHGQSELN, CG, ERHY, RR, and GS. The Tele-phosphohistidine intermediate role is filled by H17. Catalysis depends on E126, which acts as the Proton donor/acceptor.

The protein belongs to the phosphoglycerate mutase family. BPG-dependent PGAM subfamily.

Its subcellular location is the cytoplasm. It catalyses the reaction (2R)-2-phosphoglycerate = (2R)-3-phosphoglycerate. It functions in the pathway carbohydrate degradation; glycolysis; pyruvate from D-glyceraldehyde 3-phosphate: step 3/5. Its function is as follows. Could be non-functional. This Saccharomyces cerevisiae (strain ATCC 204508 / S288c) (Baker's yeast) protein is Phosphoglycerate mutase 2 (GPM2).